A 641-amino-acid chain; its full sequence is Glycerol metabolism operon regulatory protein (641 aa).

The tract at residues 1–318 (MTTHTQDIGK…MRQLMTSQLG (318 aa)) is sensor domain. Positions 52 to 189 (ALLTIAQAAL…AIAREVGNSL (138 aa)) constitute a GAF domain. In terms of domain architecture, PAS spans 203–265 (NQMYGLLESM…MLLRRAIKHA (63 aa)). The region spanning 327–552 (MSTDDPETRR…LNSIIENIAI (226 aa)) is the Sigma-54 factor interaction domain. Residues 355-362 (GEEGVGKE) and 415-424 (ANGGTLFLEK) contribute to the ATP site.

Its function is as follows. Transcriptional activator of the glycerol utilization dha operon. This is Glycerol metabolism operon regulatory protein from Citrobacter freundii.